The chain runs to 61 residues: Large ribosomal subunit protein uL30 (61 aa).

This sequence belongs to the universal ribosomal protein uL30 family. In terms of assembly, part of the 50S ribosomal subunit.

In Treponema pallidum subsp. pallidum (strain SS14), this protein is Large ribosomal subunit protein uL30.